A 486-amino-acid chain; its full sequence is Glutamyl-tRNA(Gln) amidotransferase subunit A (486 aa).

Active-site charge relay system residues include Lys75 and Ser150. Ser174 serves as the catalytic Acyl-ester intermediate.

Belongs to the amidase family. GatA subfamily. Heterotrimer of A, B and C subunits.

The enzyme catalyses L-glutamyl-tRNA(Gln) + L-glutamine + ATP + H2O = L-glutaminyl-tRNA(Gln) + L-glutamate + ADP + phosphate + H(+). Functionally, allows the formation of correctly charged Gln-tRNA(Gln) through the transamidation of misacylated Glu-tRNA(Gln) in organisms which lack glutaminyl-tRNA synthetase. The reaction takes place in the presence of glutamine and ATP through an activated gamma-phospho-Glu-tRNA(Gln). The protein is Glutamyl-tRNA(Gln) amidotransferase subunit A of Nostoc sp. (strain PCC 7120 / SAG 25.82 / UTEX 2576).